The sequence spans 242 residues: 3-oxoacyl-[acyl-carrier-protein] reductase FabG (242 aa).

Residues 9 to 12, Arg-34, 60 to 61, and Asn-87 each bind NADP(+); these read GSSR and DV. Ser-140 serves as a coordination point for substrate. Residue Tyr-153 is the Proton acceptor of the active site. Residues 153–157 and Ile-186 contribute to the NADP(+) site; that span reads YSASK.

The protein belongs to the short-chain dehydrogenases/reductases (SDR) family. Homotetramer.

The catalysed reaction is a (3R)-hydroxyacyl-[ACP] + NADP(+) = a 3-oxoacyl-[ACP] + NADPH + H(+). It functions in the pathway lipid metabolism; fatty acid biosynthesis. In terms of biological role, catalyzes the NADPH-dependent reduction of beta-ketoacyl-ACP substrates to beta-hydroxyacyl-ACP products, the first reductive step in the elongation cycle of fatty acid biosynthesis. The chain is 3-oxoacyl-[acyl-carrier-protein] reductase FabG (fabG) from Aggregatibacter actinomycetemcomitans (Actinobacillus actinomycetemcomitans).